The following is a 268-amino-acid chain: Undecaprenyl-diphosphatase (268 aa).

7 consecutive transmembrane segments (helical) span residues serine 5–serine 25, glycine 43–phenylalanine 63, leucine 84–isoleucine 104, phenylalanine 109–isoleucine 129, alanine 184–leucine 204, isoleucine 213–valine 233, and proline 248–glycine 268.

This sequence belongs to the UppP family.

The protein localises to the cell inner membrane. It carries out the reaction di-trans,octa-cis-undecaprenyl diphosphate + H2O = di-trans,octa-cis-undecaprenyl phosphate + phosphate + H(+). Catalyzes the dephosphorylation of undecaprenyl diphosphate (UPP). Confers resistance to bacitracin. In Sinorhizobium medicae (strain WSM419) (Ensifer medicae), this protein is Undecaprenyl-diphosphatase.